Here is a 199-residue protein sequence, read N- to C-terminus: Ion-translocating oxidoreductase complex subunit A (199 aa).

6 helical membrane-spanning segments follow: residues 8–28, 49–69, 75–95, 106–126, 138–158, and 178–198; these read LFTI…QFLG, VVFV…FILV, FLRT…VEFI, SLGI…AVLL, VVFG…MAAI, and AFFI…VIPL.

The protein belongs to the NqrDE/RnfAE family. The Rnf complex is probably composed of eight subunits, including RnfA, RnfB, RnfC, RnfD, RnfE and RnfG.

The protein resides in the cell membrane. Functionally, part of a membrane-bound complex that couples electron transfer with translocation of ions across the membrane. Catalyzes Na(+) transport, most probably coupled to electron transfer from reduced ferredoxin to methanophenazine and heterodisulfide reductase. Involved in heterodisulfide reduction during methanogenesis from acetate. This chain is Ion-translocating oxidoreductase complex subunit A, found in Methanosarcina acetivorans (strain ATCC 35395 / DSM 2834 / JCM 12185 / C2A).